The primary structure comprises 890 residues: Kinesin-like protein KIF20A (890 aa).

Ser2 carries the post-translational modification N-acetylserine. 3 positions are modified to phosphoserine: Ser7, Ser14, and Ser21. The Kinesin motor domain maps to 64 to 507 (KVKVYLRVRP…AKFSAIASQL (444 aa)). An ATP-binding site is contributed by 160-167 (GVTNSGKT). Ser528 is subject to Phosphoserine; by PLK1. Ser532, Ser662, Ser668, Ser685, and Ser825 each carry phosphoserine. Residues 611–762 (LDTQKELLEE…ESLQSAERAC (152 aa)) adopt a coiled-coil conformation. Positions 763 to 890 (CHSTGAGKLR…LKSGPFGKKY (128 aa)) are globular. The interval 832–865 (TNQENQQPNQQPPGKKPFLRNLLPRTPTCQSSTD) is disordered. Thr857 carries the phosphothreonine modification. A phosphoserine mark is found at Ser867, Ser878, and Ser883.

It belongs to the TRAFAC class myosin-kinesin ATPase superfamily. Kinesin family. In terms of processing, phosphorylated by PLK1 at Ser-528 during mitosis, creating a docking site for PLK1 and recruiting PLK1 at central spindle.

Its subcellular location is the golgi apparatus. The protein resides in the cytoplasm. It localises to the cytoskeleton. It is found in the spindle. Functionally, mitotic kinesin required for chromosome passenger complex (CPC)-mediated cytokinesis. Following phosphorylation by PLK1, involved in recruitment of PLK1 to the central spindle. Interacts with guanosine triphosphate (GTP)-bound forms of RAB6A and RAB6B. May act as a motor required for the retrograde RAB6 regulated transport of Golgi membranes and associated vesicles along microtubules. Has a microtubule plus end-directed motility. This is Kinesin-like protein KIF20A (KIF20A) from Homo sapiens (Human).